The primary structure comprises 500 residues: Na(+)/H(+) antiporter NhaB (500 aa).

A run of 12 helical transmembrane segments spans residues 28 to 50, 68 to 88, 98 to 118, 121 to 141, 145 to 165, 205 to 225, 244 to 264, 301 to 318, 350 to 370, 394 to 414, 449 to 469, and 477 to 497; these read FLLS…VLVG, GGLL…ALYA, LLLM…LLLF, LLLG…LAAL, FLDA…FFAV, LLMH…VGEP, QVAP…VALE, ALLV…GLAL, FQEA…VAVI, MLFI…VATI, VATP…IAPL, and MVWM…WAVS.

It belongs to the NhaB Na(+)/H(+) (TC 2.A.34) antiporter family.

The protein resides in the cell inner membrane. It carries out the reaction 2 Na(+)(in) + 3 H(+)(out) = 2 Na(+)(out) + 3 H(+)(in). Its function is as follows. Na(+)/H(+) antiporter that extrudes sodium in exchange for external protons. This chain is Na(+)/H(+) antiporter NhaB, found in Pseudomonas paraeruginosa (strain DSM 24068 / PA7) (Pseudomonas aeruginosa (strain PA7)).